The chain runs to 487 residues: N-succinylglutamate 5-semialdehyde dehydrogenase (487 aa).

An NAD(+)-binding site is contributed by 221–226; the sequence is GSSDTG. Catalysis depends on residues glutamate 244 and cysteine 278.

The protein belongs to the aldehyde dehydrogenase family. AstD subfamily.

The enzyme catalyses N-succinyl-L-glutamate 5-semialdehyde + NAD(+) + H2O = N-succinyl-L-glutamate + NADH + 2 H(+). The protein operates within amino-acid degradation; L-arginine degradation via AST pathway; L-glutamate and succinate from L-arginine: step 4/5. Functionally, catalyzes the NAD-dependent reduction of succinylglutamate semialdehyde into succinylglutamate. The polypeptide is N-succinylglutamate 5-semialdehyde dehydrogenase (Burkholderia cenocepacia (strain HI2424)).